The chain runs to 305 residues: Tetraspanin-12 (305 aa).

Over 1–12 (MAREDSVKCLRC) the chain is Cytoplasmic. Residues Cys-9 and Cys-12 are each lipidated (S-palmitoyl cysteine). A helical transmembrane segment spans residues 13-33 (LLYALNLLFWLMSISVLAVSA). Residues 34 to 59 (WMRDYLNNVLTLTAETRVEEAVILTY) lie on the Extracellular side of the membrane. Residues 60-80 (FPVVHPVMIAVCCFLIIVGML) form a helical membrane-spanning segment. The Cytoplasmic portion of the chain corresponds to 81 to 89 (GYCGTVKRN). Cys-83 carries the S-palmitoyl cysteine lipid modification. A helical membrane pass occupies residues 90–110 (LLLLAWYFGTLLVIFCVELAC). The Extracellular segment spans residues 111-224 (GVWTYEQEVM…RGTKQLQVLR (114 aa)). Residues 225–245 (FLGISIGVTQILAMILTITLL) traverse the membrane as a helical segment. Residues 246–305 (WALYYDRREPGTDQMLSLKNDTSQHLSCHSVELLKPSLSRIFEHTSMANSFNTHFEMEEL) lie on the Cytoplasmic side of the membrane.

The protein belongs to the tetraspanin (TM4SF) family. As to quaternary structure, interacts (when palmitoylated) with ADAM10. Interacts with MMP14/MT1-MMP. Component of a complex, at least composed of TSPAN12, FZD4 and norrin (NDP). In terms of processing, palmitoylated; required for interaction with ADAM10. As to expression, expressed in the neonatal retinal vasculature but not other retinal tissues. Also detected in the neonatal meningeal vasculature and in nonvascular cell types, such as the smooth muscle cells in the neonatal intestine.

Its subcellular location is the cell membrane. Its function is as follows. Regulator of cell surface receptor signal transduction. Acts as a regulator of membrane proteinases such as ADAM10 and MMP14/MT1-MMP. Activates ADAM10-dependent cleavage activity of amyloid precursor protein (APP). Activates MMP14/MT1-MMP-dependent cleavage activity. Plays a central role in retinal vascularization by regulating norrin (NDP) signal transduction. Acts in concert with norrin (NDP) to promote FZD4 multimerization and subsequent activation of FZD4, leading to promote accumulation of beta-catenin (CTNNB1) and stimulate LEF/TCF-mediated transcriptional programs. Suprisingly, it only activate the norrin (NDP)-dependent activation of FZD4, while it does not activate the Wnt-dependent activation of FZD4, suggesting the existence of a Wnt-independent signaling that also promote accumulation the beta-catenin (CTNNB1). This Mus musculus (Mouse) protein is Tetraspanin-12 (Tspan12).